A 218-amino-acid chain; its full sequence is Pyridoxine/pyridoxamine 5'-phosphate oxidase (218 aa).

Substrate contacts are provided by residues 14-17 (RREY) and lysine 72. FMN is bound by residues 67–72 (RIVLLK), 82–83 (YT), arginine 88, lysine 89, and glutamine 111. 3 residues coordinate substrate: tyrosine 129, arginine 133, and serine 137. Residues 146–147 (QS) and tryptophan 191 contribute to the FMN site. Residue 197–199 (RLH) coordinates substrate. Arginine 201 lines the FMN pocket.

This sequence belongs to the pyridoxamine 5'-phosphate oxidase family. In terms of assembly, homodimer. FMN serves as cofactor.

The catalysed reaction is pyridoxamine 5'-phosphate + O2 + H2O = pyridoxal 5'-phosphate + H2O2 + NH4(+). It carries out the reaction pyridoxine 5'-phosphate + O2 = pyridoxal 5'-phosphate + H2O2. It functions in the pathway cofactor metabolism; pyridoxal 5'-phosphate salvage; pyridoxal 5'-phosphate from pyridoxamine 5'-phosphate: step 1/1. It participates in cofactor metabolism; pyridoxal 5'-phosphate salvage; pyridoxal 5'-phosphate from pyridoxine 5'-phosphate: step 1/1. Its function is as follows. Catalyzes the oxidation of either pyridoxine 5'-phosphate (PNP) or pyridoxamine 5'-phosphate (PMP) into pyridoxal 5'-phosphate (PLP). This is Pyridoxine/pyridoxamine 5'-phosphate oxidase from Cronobacter sakazakii (strain ATCC BAA-894) (Enterobacter sakazakii).